We begin with the raw amino-acid sequence, 604 residues long: Siderophore iron transporter mirB (604 aa).

A disordered region spans residues 1-61 (MTIGSKFSLL…DNSSDEALPS (61 aa)). 14 helical membrane passes run 73–95 (AVTLVWSKWSLVAVFCLLWLVTL), 115–137 (FQSHSLLTVINIVSSAMVSALYI), 149–168 (AEGWLVMVGLSTLGLIMMAA), 178–200 (ADVFYSVGFAGMNYILCVLAADI), 207–224 (GIAFAFTSSPYMITAFAG), 237–259 (WRWGFGAFAIIFPFVASPVYFVL), 289–311 (YFFAFDIPGVILLAGGLTVFLLP), 326–343 (YIIAMIVTGFVVMVLFVL), 363–385 (TVLGACLIDATYQMSYYCWNSYF), 400–422 (AGYVGSTFQVVSGVLLFMVGFAI), 427–449 (YFRWLLFIGVPLYIFAQGLMIHF), 454–476 (QYIGYIVMCEIFISIGGSIFVLL), 489–511 (YVAAALAVLFISGGIGGAVGNAI), and 566–588 (AQARMLAAGTGLMALMFIWMFMV).

This sequence belongs to the major facilitator superfamily.

It localises to the membrane. Functionally, involved in the transport of siderophore triacestylfusarinine C and so has a role in iron homeostasis. This Emericella nidulans (strain FGSC A4 / ATCC 38163 / CBS 112.46 / NRRL 194 / M139) (Aspergillus nidulans) protein is Siderophore iron transporter mirB (mirB).